We begin with the raw amino-acid sequence, 130 residues long: RxLR effector protein PITG_14783 (130 aa).

The N-terminal stretch at 1–20 (MRLPYVFAATMATLLVSSNA) is a signal peptide. Residues 27–58 (AMLSSPNEQHQRQLRSHQTPVEDQEPDEERSL) form a disordered region. The RxLR-dEER signature appears at 38-56 (RQLRSHQTPVEDQEPDEER).

Belongs to the RxLR effector family.

The protein resides in the secreted. It localises to the host nucleus. The protein localises to the host cytoplasm. Its function is as follows. Effector that enhances P.infestans colonization of Nicotiana benthamiana leaves. The polypeptide is RxLR effector protein PITG_14783 (Phytophthora infestans (strain T30-4) (Potato late blight agent)).